Reading from the N-terminus, the 188-residue chain is Threonylcarbamoyl-AMP synthase (188 aa).

Residues 3–188 (QLSSTQVTPV…RSGLVLRNGQ (186 aa)) enclose the YrdC-like domain.

Belongs to the SUA5 family. TsaC subfamily.

It is found in the cytoplasm. It catalyses the reaction L-threonine + hydrogencarbonate + ATP = L-threonylcarbamoyladenylate + diphosphate + H2O. Required for the formation of a threonylcarbamoyl group on adenosine at position 37 (t(6)A37) in tRNAs that read codons beginning with adenine. Catalyzes the conversion of L-threonine, HCO(3)(-)/CO(2) and ATP to give threonylcarbamoyl-AMP (TC-AMP) as the acyladenylate intermediate, with the release of diphosphate. The sequence is that of Threonylcarbamoyl-AMP synthase from Shewanella denitrificans (strain OS217 / ATCC BAA-1090 / DSM 15013).